Consider the following 136-residue polypeptide: NADPH-dependent 7-cyano-7-deazaguanine reductase (136 aa).

Residue C50 is the Thioimide intermediate of the active site. D57 (proton donor) is an active-site residue. Residues 72–74 and 91–92 contribute to the substrate site; these read YEL and HE.

The protein belongs to the GTP cyclohydrolase I family. QueF type 1 subfamily.

The protein localises to the cytoplasm. The enzyme catalyses 7-aminomethyl-7-carbaguanine + 2 NADP(+) = 7-cyano-7-deazaguanine + 2 NADPH + 3 H(+). It participates in tRNA modification; tRNA-queuosine biosynthesis. Catalyzes the NADPH-dependent reduction of 7-cyano-7-deazaguanine (preQ0) to 7-aminomethyl-7-deazaguanine (preQ1). The chain is NADPH-dependent 7-cyano-7-deazaguanine reductase from Prochlorococcus marinus (strain AS9601).